A 1235-amino-acid polypeptide reads, in one-letter code: Serine/threonine-protein kinase TAO2 (1235 aa).

The residue at position 9 (S9) is a Phosphoserine. Positions 28-281 (FSDLREIGHG…SEVLLKHRFV (254 aa)) constitute a Protein kinase domain. Residues 34 to 42 (IGHGSFGAV) and K57 each bind ATP. 106 to 108 (EYC) serves as a coordination point for staurosporine. The active-site Proton acceptor is D151. G155 contacts staurosporine. A Phosphoserine modification is found at S181. Positions 318–457 (QEAPNGPGAE…PTSTSSSSAR (140 aa)) are disordered. Residues 350–374 (SSHSVPSMSISASSQSSSVNSLADA) are compositionally biased toward low complexity. Acidic residues predominate over residues 375-395 (SDNEEEEEEEEEEEEEEEEEG). Basic and acidic residues predominate over residues 396–411 (PESREMAMMQEGEHTV). S416 is modified (phosphoserine). Coiled-coil stretches lie at residues 488–523 (SALR…EEHS) and 576–603 (KELA…LQEN). The residue at position 658 (S658) is a Phosphoserine. Residues 683-715 (LRQHEATRELELRQLQAVQRTRAELTRLQHQTE) are a coiled coil. 3 positions are modified to phosphoserine: S777, S825, and S827. The disordered stretch occupies residues 892–941 (GPVLTPVPEEEEEEEEEGGAPIGTPRDPGDGCPSPDIPPEPPPSHLRQYP). Over residues 899 to 909 (PEEEEEEEEEG) the composition is skewed to acidic residues. The span at 926-935 (PDIPPEPPPS) shows a compositional bias: pro residues. A run of 3 helical transmembrane segments spans residues 967 to 987 (LLPL…GGGL), 989 to 1009 (AALL…LFLC), and 1014 to 1034 (LPPS…VLSL). R1038 carries the post-translational modification Phosphoserine. Transmembrane regions (helical) follow at residues 1040-1060 (LMGV…SLAL) and 1170-1190 (LASC…LLKG). The tract at residues 1210-1235 (SASRQLPPGTVAGRRSQTRRALPPWR) is disordered.

This sequence belongs to the protein kinase superfamily. STE Ser/Thr protein kinase family. STE20 subfamily. Self-associates. Interacts with MAP2K3 and MAP2K6. Interacts with tubulins. Interacts with MAP3K7 and interferes with MAP3K7-binding to CHUK and thus prevents NF-kappa-B activation. Isoform 2 interacts with PCDH8; this complex may also include CDH2. It depends on Mg(2+) as a cofactor. Post-translationally, autophosphorylated. Phosphorylated by ATM. Phosphorylated on Ser-1038 by MAPK14. This phosphorylation is required PCDH8 for endocytosis.

It localises to the cytoplasmic vesicle membrane. It is found in the cytoplasm. Its subcellular location is the cytoskeleton. The protein localises to the cell projection. The protein resides in the dendrite. It catalyses the reaction L-seryl-[protein] + ATP = O-phospho-L-seryl-[protein] + ADP + H(+). The enzyme catalyses L-threonyl-[protein] + ATP = O-phospho-L-threonyl-[protein] + ADP + H(+). Moderately inhibited by staurosporine, a broad-range protein kinase inhibitor. Its function is as follows. Serine/threonine-protein kinase involved in different processes such as membrane blebbing and apoptotic bodies formation DNA damage response and MAPK14/p38 MAPK stress-activated MAPK cascade. Phosphorylates itself, MBP, activated MAPK8, MAP2K3, MAP2K6 and tubulins. Activates the MAPK14/p38 MAPK signaling pathway through the specific activation and phosphorylation of the upstream MAP2K3 and MAP2K6 kinases. In response to DNA damage, involved in the G2/M transition DNA damage checkpoint by activating the p38/MAPK14 stress-activated MAPK cascade, probably by mediating phosphorylation of upstream MAP2K3 and MAP2K6 kinases. May affect microtubule organization and stability. May play a role in the osmotic stress-MAPK8 pathway. Prevents MAP3K7-mediated activation of CHUK, and thus NF-kappa-B activation. Isoform 2, but not isoform 1, is required for PCDH8 endocytosis. Following homophilic interactions between PCDH8 extracellular domains, isoform 2 phosphorylates and activates MAPK14/p38 MAPK which in turn phosphorylates isoform 2. This process leads to PCDH8 endocytosis and CDH2 cointernalization. Both isoforms are involved in MAPK14/p38 MAPK activation. This Rattus norvegicus (Rat) protein is Serine/threonine-protein kinase TAO2 (Taok2).